We begin with the raw amino-acid sequence, 957 residues long: Glycine dehydrogenase (decarboxylating) (957 aa).

Residue K702 is modified to N6-(pyridoxal phosphate)lysine.

Belongs to the GcvP family. In terms of assembly, the glycine cleavage system is composed of four proteins: P, T, L and H. It depends on pyridoxal 5'-phosphate as a cofactor.

The enzyme catalyses N(6)-[(R)-lipoyl]-L-lysyl-[glycine-cleavage complex H protein] + glycine + H(+) = N(6)-[(R)-S(8)-aminomethyldihydrolipoyl]-L-lysyl-[glycine-cleavage complex H protein] + CO2. In terms of biological role, the glycine cleavage system catalyzes the degradation of glycine. The P protein binds the alpha-amino group of glycine through its pyridoxal phosphate cofactor; CO(2) is released and the remaining methylamine moiety is then transferred to the lipoamide cofactor of the H protein. This is Glycine dehydrogenase (decarboxylating) from Synechococcus sp. (strain RCC307).